The following is a 452-amino-acid chain: tRNA modification GTPase MnmE (452 aa).

Positions 21, 78, and 118 each coordinate (6S)-5-formyl-5,6,7,8-tetrahydrofolate. A TrmE-type G domain is found at 214 to 375 (GMKVVIAGRP…LREHLKQAMG (162 aa)). Asn-224 is a binding site for K(+). GTP contacts are provided by residues 224–229 (NAGKSS), 243–249 (TDIAGTT), and 268–271 (DTAG). Residue Ser-228 coordinates Mg(2+). 3 residues coordinate K(+): Thr-243, Ile-245, and Thr-248. A Mg(2+)-binding site is contributed by Thr-249. Lys-452 contacts (6S)-5-formyl-5,6,7,8-tetrahydrofolate.

The protein belongs to the TRAFAC class TrmE-Era-EngA-EngB-Septin-like GTPase superfamily. TrmE GTPase family. In terms of assembly, homodimer. Heterotetramer of two MnmE and two MnmG subunits. The cofactor is K(+).

The protein localises to the cytoplasm. Its function is as follows. Exhibits a very high intrinsic GTPase hydrolysis rate. Involved in the addition of a carboxymethylaminomethyl (cmnm) group at the wobble position (U34) of certain tRNAs, forming tRNA-cmnm(5)s(2)U34. This chain is tRNA modification GTPase MnmE, found in Haemophilus influenzae (strain ATCC 51907 / DSM 11121 / KW20 / Rd).